Consider the following 176-residue polypeptide: NAD(P)H-quinone oxidoreductase subunit 6, chloroplastic (176 aa).

The next 5 helical transmembrane spans lie at 10–30 (FLLV…VLLT), 32–52 (PIYS…FYIL), 61–81 (AQLL…VMFM), 92–112 (LWTV…VSLM), and 152–172 (FFLP…GAIA).

It belongs to the complex I subunit 6 family. In terms of assembly, NDH is composed of at least 16 different subunits, 5 of which are encoded in the nucleus.

The protein localises to the plastid. It is found in the chloroplast thylakoid membrane. The enzyme catalyses a plastoquinone + NADH + (n+1) H(+)(in) = a plastoquinol + NAD(+) + n H(+)(out). The catalysed reaction is a plastoquinone + NADPH + (n+1) H(+)(in) = a plastoquinol + NADP(+) + n H(+)(out). Functionally, NDH shuttles electrons from NAD(P)H:plastoquinone, via FMN and iron-sulfur (Fe-S) centers, to quinones in the photosynthetic chain and possibly in a chloroplast respiratory chain. The immediate electron acceptor for the enzyme in this species is believed to be plastoquinone. Couples the redox reaction to proton translocation, and thus conserves the redox energy in a proton gradient. The sequence is that of NAD(P)H-quinone oxidoreductase subunit 6, chloroplastic (ndhG) from Eucalyptus globulus subsp. globulus (Tasmanian blue gum).